The primary structure comprises 398 residues: Isopenicillin N epimerase (398 aa).

Lys217 carries the N6-(pyridoxal phosphate)lysine modification.

This sequence belongs to the class-V pyridoxal-phosphate-dependent aminotransferase family. Pyridoxal 5'-phosphate serves as cofactor.

It carries out the reaction isopenicillin N = penicillin N. Its pathway is antibiotic biosynthesis; cephalosporin C biosynthesis. Functionally, catalyzes the reversible isomerization between isopenicillin N and penicillin N. The sequence is that of Isopenicillin N epimerase (cefD) from Streptomyces clavuligerus.